A 546-amino-acid chain; its full sequence is Probable acyl-activating enzyme 21 (546 aa).

Belongs to the ATP-dependent AMP-binding enzyme family.

Its function is as follows. May act as an acid--thiol ligase that activates carboxylic acids by forming acyl-CoAs. The sequence is that of Probable acyl-activating enzyme 21 (AEE21) from Arabidopsis thaliana (Mouse-ear cress).